Here is a 164-residue protein sequence, read N- to C-terminus: Ribosome maturation factor RimP (164 aa).

Belongs to the RimP family.

Its subcellular location is the cytoplasm. Functionally, required for maturation of 30S ribosomal subunits. In Cellvibrio japonicus (strain Ueda107) (Pseudomonas fluorescens subsp. cellulosa), this protein is Ribosome maturation factor RimP.